A 149-amino-acid chain; its full sequence is Large ribosomal subunit protein bL9 (149 aa).

Position 89 is an N6-acetyllysine (Lys-89).

This sequence belongs to the bacterial ribosomal protein bL9 family.

Functionally, binds to the 23S rRNA. The sequence is that of Large ribosomal subunit protein bL9 from Shigella boydii serotype 18 (strain CDC 3083-94 / BS512).